A 1828-amino-acid polypeptide reads, in one-letter code: Protein TIC 214 (1828 aa).

A run of 6 helical transmembrane segments spans residues 18–38 (IINSVVVVGLYYGFLTTFSIG), 64–84 (FITGQLMIFISIYYAPLHLAM), 87–107 (PYTITVLGLPYLLFHFFWKNH), 124–144 (FSIQSIFLNNFIFQLLNHFVL), 172–192 (VGWLIGHILFMKWVGLILFWI), and 222–242 (VNIFLFITCVYYLGRIPSPIL). Residues 270–279 (SEAKETKQEQ) are compositionally biased toward basic and acidic residues. Disordered stretches follow at residues 270–301 (SEAKETKQEQKGSFAEEDSSLGSEEREDPNKL), 618–637 (DLQQQERENEEESTEDHAIR), 741–763 (EFKTSNSDEKETKEKEKKREDKK), and 1533–1571 (KEEFGQGNLGSDTQNQQKDVEKDYAKSDIKKRGKKRQSK). Residues 1550-1562 (KDVEKDYAKSDIK) are compositionally biased toward basic and acidic residues.

It belongs to the TIC214 family. Part of the Tic complex.

It is found in the plastid. Its subcellular location is the chloroplast inner membrane. Its function is as follows. Involved in protein precursor import into chloroplasts. May be part of an intermediate translocation complex acting as a protein-conducting channel at the inner envelope. This Calycanthus floridus var. glaucus (Eastern sweetshrub) protein is Protein TIC 214.